Consider the following 263-residue polypeptide: Small ribosomal subunit protein eS4 (263 aa).

One can recognise an S4 RNA-binding domain in the interval 42–104; the sequence is LPLIVFLRNR…TGEHFRLVYD (63 aa).

The protein belongs to the eukaryotic ribosomal protein eS4 family.

This is Small ribosomal subunit protein eS4 (RPS4Y1) from Gorilla gorilla gorilla (Western lowland gorilla).